The sequence spans 334 residues: S-adenosylmethionine:tRNA ribosyltransferase-isomerase (334 aa).

It belongs to the QueA family. In terms of assembly, monomer.

The protein resides in the cytoplasm. The enzyme catalyses 7-aminomethyl-7-carbaguanosine(34) in tRNA + S-adenosyl-L-methionine = epoxyqueuosine(34) in tRNA + adenine + L-methionine + 2 H(+). Its pathway is tRNA modification; tRNA-queuosine biosynthesis. Its function is as follows. Transfers and isomerizes the ribose moiety from AdoMet to the 7-aminomethyl group of 7-deazaguanine (preQ1-tRNA) to give epoxyqueuosine (oQ-tRNA). This chain is S-adenosylmethionine:tRNA ribosyltransferase-isomerase, found in Aquifex aeolicus (strain VF5).